The primary structure comprises 449 residues: UDP-N-acetylmuramoylalanine--D-glutamate ligase (449 aa).

Position 117–123 (117–123) interacts with ATP; the sequence is GSNGKTT.

It belongs to the MurCDEF family.

The protein resides in the cytoplasm. The enzyme catalyses UDP-N-acetyl-alpha-D-muramoyl-L-alanine + D-glutamate + ATP = UDP-N-acetyl-alpha-D-muramoyl-L-alanyl-D-glutamate + ADP + phosphate + H(+). It functions in the pathway cell wall biogenesis; peptidoglycan biosynthesis. In terms of biological role, cell wall formation. Catalyzes the addition of glutamate to the nucleotide precursor UDP-N-acetylmuramoyl-L-alanine (UMA). The chain is UDP-N-acetylmuramoylalanine--D-glutamate ligase from Exiguobacterium sibiricum (strain DSM 17290 / CCUG 55495 / CIP 109462 / JCM 13490 / 255-15).